Here is a 632-residue protein sequence, read N- to C-terminus: 2-oxoacid:ferredoxin oxidoreductase subunit alpha (632 aa).

The YPITP motif signature appears at 253–257 (YPITP). Substrate contacts are provided by Thr256 and Arg344.

In terms of assembly, heterodimer composed of an alpha and a beta subunit.

It is found in the cytoplasm. The catalysed reaction is a 2-oxocarboxylate + 2 oxidized [2Fe-2S]-[ferredoxin] + CoA = an acyl-CoA + 2 reduced [2Fe-2S]-[ferredoxin] + CO2 + H(+). Functionally, catalyzes the coenzyme A-dependent oxidative decarboxylation of different 2-oxoacids such as 2-oxoglutarate, pyruvate and 2-oxobutyrate to form their CoA derivatives. The chain is 2-oxoacid:ferredoxin oxidoreductase subunit alpha from Sulfolobus sp.